The primary structure comprises 498 residues: Lysine--tRNA ligase (498 aa).

Mg(2+)-binding residues include Glu-407 and Glu-414.

Belongs to the class-II aminoacyl-tRNA synthetase family. Homodimer. Mg(2+) serves as cofactor.

Its subcellular location is the cytoplasm. The enzyme catalyses tRNA(Lys) + L-lysine + ATP = L-lysyl-tRNA(Lys) + AMP + diphosphate. This Rhizobium meliloti (strain 1021) (Ensifer meliloti) protein is Lysine--tRNA ligase (lysS).